A 780-amino-acid polypeptide reads, in one-letter code: Protein SAV (780 aa).

Residues 253 to 260 (GPPGTGKT) and 528 to 535 (GPPGTGKT) each bind ATP.

It belongs to the AAA ATPase family. CDC48 subfamily.

In terms of biological role, not yet known, shows ATPase activity. In Sulfolobus acidocaldarius (strain ATCC 33909 / DSM 639 / JCM 8929 / NBRC 15157 / NCIMB 11770), this protein is Protein SAV (sav).